Reading from the N-terminus, the 2312-residue chain is Protein Ycf2 (2312 aa).

1630–1637 contributes to the ATP binding site; that stretch reads GSIGTGRS.

The protein belongs to the Ycf2 family.

The protein resides in the plastid. It localises to the chloroplast stroma. In terms of biological role, probable ATPase of unknown function. Its presence in a non-photosynthetic plant (Epifagus virginiana) and experiments in tobacco indicate that it has an essential function which is probably not related to photosynthesis. This is Protein Ycf2 from Manihot esculenta (Cassava).